The primary structure comprises 481 residues: (S)-N-methylcoclaurine 3'-hydroxylase isozyme 1 (481 aa).

Residue Cys-423 participates in heme binding.

This sequence belongs to the cytochrome P450 family. Requires heme as cofactor. In terms of tissue distribution, restricted to the parietal region of sieve elements adjacent or proximal to laticifers in roots, stems, leaves, carpels and hypocotyls.

The protein resides in the endoplasmic reticulum. It catalyses the reaction (S)-N-methylcoclaurine + reduced [NADPH--hemoprotein reductase] + O2 = (S)-3'-hydroxy-N-methylcoclaurine + oxidized [NADPH--hemoprotein reductase] + H2O + H(+). It functions in the pathway alkaloid biosynthesis; (S)-reticuline biosynthesis; (S)-reticuline from (S)-norcoclaurine: step 3/4. Functionally, cytochrome P450 monooxygenase involved in the biosynthesis of benzylisoquinoline alkaloids. Catalyzes the 3'-hydroxylation of (S)-N-methylcoclaurine. The polypeptide is (S)-N-methylcoclaurine 3'-hydroxylase isozyme 1 (Papaver somniferum (Opium poppy)).